We begin with the raw amino-acid sequence, 219 residues long: 7-cyano-7-deazaguanine synthase (219 aa).

10–20 (FSGGQDSTTCL) lines the ATP pocket. Zn(2+)-binding residues include cysteine 188, cysteine 197, cysteine 200, and cysteine 203.

It belongs to the QueC family. As to quaternary structure, homodimer. Requires Zn(2+) as cofactor.

The enzyme catalyses 7-carboxy-7-deazaguanine + NH4(+) + ATP = 7-cyano-7-deazaguanine + ADP + phosphate + H2O + H(+). Its pathway is purine metabolism; 7-cyano-7-deazaguanine biosynthesis. Its function is as follows. Catalyzes the ATP-dependent conversion of 7-carboxy-7-deazaguanine (CDG) to 7-cyano-7-deazaguanine (preQ(0)). The chain is 7-cyano-7-deazaguanine synthase from Clostridium botulinum (strain 657 / Type Ba4).